The following is a 236-amino-acid chain: Probable ascorbate-specific transmembrane electron transporter 2 (236 aa).

At 1 to 11 (MAAGLGVKAAP) the chain is on the cytoplasmic side. Residues 12 to 32 (FTYVAHALAVAAAVMVLVWCI) form a helical membrane-spanning segment. Residues 15–219 (VAHALAVAAA…FGAAVVVAAV (205 aa)) enclose the Cytochrome b561 domain. The Extracellular portion of the chain corresponds to 33–53 (SFRGGLAFEADNKNLIFNVHP). His52 provides a ligand contact to heme b. A helical transmembrane segment spans residues 54-74 (VLMLIGYIILGSEAIMIYKIF). An L-ascorbate-binding site is contributed by 67 to 75 (AIMIYKIFP). The Cytoplasmic portion of the chain corresponds to 75 to 84 (PKLNHDTTKL). Residues 85–105 (IHLILHAIAIVLGAVGIYCAF) traverse the membrane as a helical segment. Positions 86 and 120 each coordinate heme b. Topologically, residues 106–122 (KFHNESGIANLYSLHSW) are extracellular. Residue 116 to 125 (LYSLHSWLGI) coordinates monodehydro-L-ascorbate radical. The helical transmembrane segment at 123–143 (LGIGTISLYGIQWIFGFVAFF) threads the bilayer. Residues 144–153 (YPGAAPHVRR) lie on the Cytoplasmic side of the membrane. The chain crosses the membrane as a helical span at residues 154–174 (GALPWHVLFGLFVYVLTLATA). Position 159 (His159) interacts with heme b. At 175 to 196 (ELGLLEKLTFLQSSGLDKYGAE) the chain is on the extracellular side. The chain crosses the membrane as a helical span at residues 197–217 (AFLVNFTGLVVALFGAAVVVA). Residues 218 to 236 (AVAPAHVEEPEGYAPIPVN) are Cytoplasmic-facing.

The cofactor is heme b.

Its subcellular location is the membrane. Its function is as follows. Two-heme-containing cytochrome. Catalyzes ascorbate-dependent trans-membrane electron transfer by utilizing a concerted H(+)/e(-) transfer mechanism. The sequence is that of Probable ascorbate-specific transmembrane electron transporter 2 from Oryza sativa subsp. japonica (Rice).